Consider the following 589-residue polypeptide: Putative phospholipase B-like 2 (589 aa).

The N-terminal stretch at 1–41 is a signal peptide; sequence MVAPMYGSPGGRLARAVTRALALALVLALLVGLFLSGLTGA. N-linked (GlcNAc...) asparagine glycans are attached at residues N88 and N110. C142 and C152 are joined by a disulfide. N-linked (GlcNAc...) asparagine glycans are attached at residues N174, N231, N436, and N465. C492 and C495 are joined by a disulfide. N515 is a glycosylation site (N-linked (GlcNAc...) asparagine).

It belongs to the phospholipase B-like family. Interacts with IGF2R. Post-translationally, glycosylated; contains mannose 6-phosphate sugars.

It is found in the lysosome lumen. Putative phospholipase. In Bos taurus (Bovine), this protein is Putative phospholipase B-like 2 (PLBD2).